Consider the following 407-residue polypeptide: Probable tRNA sulfurtransferase (407 aa).

The THUMP domain maps to 61 to 165 (NEITYRLSKI…LDAIYMYEEV (105 aa)). Residues 183-184 (ML), 208-209 (HF), R265, G287, and Q296 contribute to the ATP site.

This sequence belongs to the ThiI family.

It is found in the cytoplasm. It catalyses the reaction [ThiI sulfur-carrier protein]-S-sulfanyl-L-cysteine + a uridine in tRNA + 2 reduced [2Fe-2S]-[ferredoxin] + ATP + H(+) = [ThiI sulfur-carrier protein]-L-cysteine + a 4-thiouridine in tRNA + 2 oxidized [2Fe-2S]-[ferredoxin] + AMP + diphosphate. It carries out the reaction [ThiS sulfur-carrier protein]-C-terminal Gly-Gly-AMP + S-sulfanyl-L-cysteinyl-[cysteine desulfurase] + AH2 = [ThiS sulfur-carrier protein]-C-terminal-Gly-aminoethanethioate + L-cysteinyl-[cysteine desulfurase] + A + AMP + 2 H(+). It participates in cofactor biosynthesis; thiamine diphosphate biosynthesis. Its function is as follows. Catalyzes the ATP-dependent transfer of a sulfur to tRNA to produce 4-thiouridine in position 8 of tRNAs, which functions as a near-UV photosensor. Also catalyzes the transfer of sulfur to the sulfur carrier protein ThiS, forming ThiS-thiocarboxylate. This is a step in the synthesis of thiazole, in the thiamine biosynthesis pathway. The sulfur is donated as persulfide by IscS. In Staphylococcus aureus (strain bovine RF122 / ET3-1), this protein is Probable tRNA sulfurtransferase.